An 85-amino-acid polypeptide reads, in one-letter code: MGIFDWKHWLIILIVVVLVFGTKRLKTLGSDIGEAIKGFRKAVNTEEGENRPAEPQTGTSAGDTLNKTQTIEGQAQKVDTPVRKD.

Residues 1–21 (MGIFDWKHWLIILIVVVLVFG) form a helical membrane-spanning segment. The tract at residues 43–85 (VNTEEGENRPAEPQTGTSAGDTLNKTQTIEGQAQKVDTPVRKD) is disordered. Over residues 56–73 (QTGTSAGDTLNKTQTIEG) the composition is skewed to polar residues.

Belongs to the TatA/E family. As to quaternary structure, the Tat system comprises two distinct complexes: a TatABC complex, containing multiple copies of TatA, TatB and TatC subunits, and a separate TatA complex, containing only TatA subunits. Substrates initially bind to the TatABC complex, which probably triggers association of the separate TatA complex to form the active translocon.

It is found in the cell inner membrane. Its function is as follows. Part of the twin-arginine translocation (Tat) system that transports large folded proteins containing a characteristic twin-arginine motif in their signal peptide across membranes. TatA could form the protein-conducting channel of the Tat system. In Azotobacter vinelandii (strain DJ / ATCC BAA-1303), this protein is Sec-independent protein translocase protein TatA.